The chain runs to 620 residues: Guanylate cyclase soluble subunit beta-1 (620 aa).

His-105 lines the heme pocket. The region spanning 421 to 554 is the Guanylate cyclase domain; sequence TILFSGIVGF…NTVNLTSRTE (134 aa).

This sequence belongs to the adenylyl cyclase class-4/guanylyl cyclase family. In terms of assembly, the active enzyme is formed by a heterodimer of an alpha and a beta subunit. Heterodimer with GUCY1A1. Can also form inactive homodimers in vitro. The cofactor is heme.

Its subcellular location is the cytoplasm. The enzyme catalyses GTP = 3',5'-cyclic GMP + diphosphate. Activated by nitric oxide in the presence of magnesium or manganese ions. Mediates responses to nitric oxide (NO) by catalyzing the biosynthesis of the signaling molecule cGMP. This Mus musculus (Mouse) protein is Guanylate cyclase soluble subunit beta-1 (Gucy1b1).